Consider the following 349-residue polypeptide: Delta(7)-sterol 5(6)-desaturase ERG3A (349 aa).

Helical transmembrane passes span 84–104 (ITWI…YIFI), 124–144 (IIAA…FFLL), and 162–182 (LWYD…CIYW). The Fatty acid hydroxylase domain maps to 170–296 (PLFLLFTDFC…FTAFDRMGGT (127 aa)). The Histidine box-1 signature appears at 184 to 188 (HRWLH). The Histidine box-2 motif lies at 197–201 (HKLHH). A helical membrane pass occupies residues 227-247 (HIFPFIFPLQKMAYVALFVFV). Residues 272–276 (HSLHH) carry the Histidine box-3 motif.

This sequence belongs to the sterol desaturase family.

The protein localises to the endoplasmic reticulum membrane. The catalysed reaction is episterol + 2 Fe(II)-[cytochrome b5] + O2 + 2 H(+) = 5-dehydroepisterol + 2 Fe(III)-[cytochrome b5] + 2 H2O. It participates in steroid metabolism; ergosterol biosynthesis. Its function is as follows. C-5 sterol desaturase; part of the third module of ergosterol biosynthesis pathway that includes the late steps of the pathway. ERG3A and ERG3BB catalyze the introduction of a C-5 double bond in the B ring to produce 5-dehydroepisterol. The third module or late pathway involves the ergosterol synthesis itself through consecutive reactions that mainly occur in the endoplasmic reticulum (ER) membrane. Firstly, the squalene synthase ERG9 catalyzes the condensation of 2 farnesyl pyrophosphate moieties to form squalene, which is the precursor of all steroids. Squalene synthase is crucial for balancing the incorporation of farnesyl diphosphate (FPP) into sterol and nonsterol isoprene synthesis. Secondly, squalene is converted into lanosterol by the consecutive action of the squalene epoxidase ERG1 and the lanosterol synthase ERG7. Then, the delta(24)-sterol C-methyltransferase ERG6 methylates lanosterol at C-24 to produce eburicol. Eburicol is the substrate of the sterol 14-alpha demethylase encoded by CYP51A, CYP51B and CYP51C, to yield 4,4,24-trimethyl ergosta-8,14,24(28)-trienol. CYP51B encodes the enzyme primarily responsible for sterol 14-alpha-demethylation, and plays an essential role in ascospore formation. CYP51A encodes an additional sterol 14-alpha-demethylase, induced on ergosterol depletion and responsible for the intrinsic variation in azole sensitivity. The third CYP51 isoform, CYP51C, does not encode a sterol 14-alpha-demethylase, but is required for full virulence on host wheat ears. The C-14 reductase ERG24 then reduces the C14=C15 double bond which leads to 4,4-dimethylfecosterol. A sequence of further demethylations at C-4, involving the C-4 demethylation complex containing the C-4 methylsterol oxidases ERG25, the sterol-4-alpha-carboxylate 3-dehydrogenase ERG26 and the 3-keto-steroid reductase ERG27, leads to the production of fecosterol via 4-methylfecosterol. ERG28 has a role as a scaffold to help anchor ERG25, ERG26 and ERG27 to the endoplasmic reticulum. The C-8 sterol isomerase ERG2 then catalyzes the reaction which results in unsaturation at C-7 in the B ring of sterols and thus converts fecosterol to episterol. The sterol-C5-desaturases ERG3A and ERG3BB then catalyze the introduction of a C-5 double bond in the B ring to produce 5-dehydroepisterol. The C-22 sterol desaturases ERG5A and ERG5B further convert 5-dehydroepisterol into ergosta-5,7,22,24(28)-tetraen-3beta-ol by forming the C-22(23) double bond in the sterol side chain. Finally, ergosta-5,7,22,24(28)-tetraen-3beta-ol is substrate of the C-24(28) sterol reductase ERG4 to produce ergosterol. The sequence is that of Delta(7)-sterol 5(6)-desaturase ERG3A from Gibberella zeae (strain ATCC MYA-4620 / CBS 123657 / FGSC 9075 / NRRL 31084 / PH-1) (Wheat head blight fungus).